Here is a 221-residue protein sequence, read N- to C-terminus: Translation initiation factor 6 (221 aa).

Belongs to the eIF-6 family.

Functionally, binds to the 50S ribosomal subunit and prevents its association with the 30S ribosomal subunit to form the 70S initiation complex. The protein is Translation initiation factor 6 of Cenarchaeum symbiosum (strain A).